We begin with the raw amino-acid sequence, 154 residues long: Myoglobin-2 (154 aa).

The 147-residue stretch at 2–148 folds into the Globin domain; the sequence is GLSDGEWQLV…FRKDIATKYK (147 aa). Position 65 (H65) interacts with nitrite. H65 is an O2 binding site. H94 is a binding site for heme b.

This sequence belongs to the globin family. As to quaternary structure, monomeric.

It localises to the cytoplasm. It is found in the sarcoplasm. The enzyme catalyses Fe(III)-heme b-[protein] + nitric oxide + H2O = Fe(II)-heme b-[protein] + nitrite + 2 H(+). It catalyses the reaction H2O2 + AH2 = A + 2 H2O. Its function is as follows. Monomeric heme protein which primary function is to store oxygen and facilitate its diffusion within muscle tissues. Reversibly binds oxygen through a pentacoordinated heme iron and enables its timely and efficient release as needed during periods of heightened demand. Depending on the oxidative conditions of tissues and cells, and in addition to its ability to bind oxygen, it also has a nitrite reductase activity whereby it regulates the production of bioactive nitric oxide. Under stress conditions, like hypoxia and anoxia, it also protects cells against reactive oxygen species thanks to its pseudoperoxidase activity. The protein is Myoglobin-2 (MB2) of Stenella attenuata (Pantropical spotted dolphin).